Here is a 321-residue protein sequence, read N- to C-terminus: Transmembrane protein fend (321 aa).

A signal peptide spans 1–18; sequence MFHSLVLMACALAALSVA. Residues 19-261 lie on the Extracellular side of the membrane; it reads QGAGSARSKS…ALPTPSELGG (243 aa). A helical membrane pass occupies residues 262 to 282; the sequence is VVYPAFGALAFFLALLVMFLF. Residues 283–321 are Cytoplasmic-facing; sequence LRPQRKRFPLDADSADTATLIGRSSSSSRNSMDASTLHV.

It localises to the membrane. Its function is as follows. Involved in the normal targeting of ventral muscle, muscle 12, by motoneurons. May function as an axon guidance molecule involved in neuromuscular specificity. This is Transmembrane protein fend (fend) from Drosophila melanogaster (Fruit fly).